Here is a 304-residue protein sequence, read N- to C-terminus: Cell surface-binding protein OPG105 (304 aa).

The 235-residue stretch at 1–235 (MPQQLSPINI…NDDTQVYYSG (235 aa)) folds into the Alpha-carbonic anhydrase domain. Residues 1–275 (MPQQLSPINI…YQKYIEGNKT (275 aa)) are Virion surface-facing. A helical transmembrane segment spans residues 276–294 (FAIIAIVFVFILTAILFFM). At 295-304 (SQRYSREKQN) the chain is on the intravirion side.

It belongs to the alpha-carbonic anhydrase family. In terms of assembly, homodimer; disulfide-linked. Apparently non-glycosylated.

It localises to the virion membrane. Binds to chondroitin sulfate on the cell surface to provide virion attachment to target cell. This chain is Cell surface-binding protein OPG105 (OPG105), found in Vaccinia virus (strain Ankara) (VACV).